The primary structure comprises 102 residues: Small ribosomal subunit protein uS10 (102 aa).

The protein belongs to the universal ribosomal protein uS10 family. Part of the 30S ribosomal subunit.

Its function is as follows. Involved in the binding of tRNA to the ribosomes. This is Small ribosomal subunit protein uS10 from Gluconobacter oxydans (strain 621H) (Gluconobacter suboxydans).